We begin with the raw amino-acid sequence, 80 residues long: Omega-conotoxin-like 1 (80 aa).

The first 22 residues, 1–22 (MKLTCVLIVVVLFLTACQLITT), serve as a signal peptide directing secretion. A propeptide spanning residues 23-49 (DDSTGKQRYQAWKLRSKMQNSVLSRLS) is cleaved from the precursor. Cystine bridges form between C52/C66, C59/C70, and C65/C79.

This sequence belongs to the conotoxin O1 superfamily. Post-translationally, peptide predicted to begin at Arg-51, but it seems more probable that it begins at Cys-52, since this position corresponds to a dibasic residue cleavage. As to expression, expressed by the venom duct.

The protein localises to the secreted. In terms of biological role, omega-conotoxins act at presynaptic membranes, they bind and block voltage-gated calcium channels (Cav). The protein is Omega-conotoxin-like 1 of Conus capitaneus (Captain cone).